A 385-amino-acid chain; its full sequence is Deoxyhypusine synthase (385 aa).

NAD(+)-binding positions include Ser-108 to Ser-112, Thr-134 to Gly-136, Glu-140, and Asp-257. Glu-139 to Glu-140 provides a ligand contact to spermidine. Asp-262 contacts spermidine. Gly-304 is an NAD(+) binding site. Spermidine is bound at residue His-309. Thr-329–Gly-330 is a binding site for NAD(+). Spermidine contacts are provided by residues Gly-335 to Asp-337 and Glu-344 to Lys-350. Lys-350 acts as the Nucleophile in catalysis. Asp-363–Val-364 is an NAD(+) binding site.

It belongs to the deoxyhypusine synthase family. NAD(+) serves as cofactor.

The enzyme catalyses [eIF5A protein]-L-lysine + spermidine = [eIF5A protein]-deoxyhypusine + propane-1,3-diamine. It participates in protein modification; eIF5A hypusination. Its function is as follows. Catalyzes the NAD-dependent oxidative cleavage of spermidine and the subsequent transfer of the butylamine moiety of spermidine to the epsilon-amino group of a specific lysine residue of the eIF-5A precursor protein to form the intermediate deoxyhypusine residue. The sequence is that of Deoxyhypusine synthase (DYS1) from Candida glabrata (strain ATCC 2001 / BCRC 20586 / JCM 3761 / NBRC 0622 / NRRL Y-65 / CBS 138) (Yeast).